The chain runs to 459 residues: tRNA modification GTPase MnmE (459 aa).

The (6S)-5-formyl-5,6,7,8-tetrahydrofolate site is built by R23, E85, and R124. The 160-residue stretch at 221 to 380 folds into the TrmE-type G domain; that stretch reads GLSTAIIGRP…LEKAIADTFF (160 aa). N231 provides a ligand contact to K(+). GTP contacts are provided by residues 231–236, 250–256, and 275–278; these read NVGKSS, TEIPGTT, and DTAG. S235 contacts Mg(2+). K(+)-binding residues include T250, I252, and T255. Position 256 (T256) interacts with Mg(2+). (6S)-5-formyl-5,6,7,8-tetrahydrofolate is bound at residue K459.

It belongs to the TRAFAC class TrmE-Era-EngA-EngB-Septin-like GTPase superfamily. TrmE GTPase family. In terms of assembly, homodimer. Heterotetramer of two MnmE and two MnmG subunits. It depends on K(+) as a cofactor.

Its subcellular location is the cytoplasm. Its function is as follows. Exhibits a very high intrinsic GTPase hydrolysis rate. Involved in the addition of a carboxymethylaminomethyl (cmnm) group at the wobble position (U34) of certain tRNAs, forming tRNA-cmnm(5)s(2)U34. The chain is tRNA modification GTPase MnmE from Oceanobacillus iheyensis (strain DSM 14371 / CIP 107618 / JCM 11309 / KCTC 3954 / HTE831).